A 435-amino-acid polypeptide reads, in one-letter code: 5-hydroxybenzimidazole synthase (435 aa).

Substrate contacts are provided by residues Met-95, Tyr-124, His-163, 186-188 (SKG), 227-230 (NGLR), and Glu-266. A Zn(2+)-binding site is contributed by His-270. Substrate is bound at residue Tyr-293. A Zn(2+)-binding site is contributed by His-334. Cys-410, Cys-413, and Cys-417 together coordinate [4Fe-4S] cluster.

It belongs to the ThiC family. 5-hydroxybenzimidazole synthase subfamily. In terms of assembly, homodimer. The cofactor is [4Fe-4S] cluster.

The enzyme catalyses 5-amino-1-(5-phospho-beta-D-ribosyl)imidazole + AH2 + S-adenosyl-L-methionine = 5-hydroxybenzimidazole + 5'-deoxyadenosine + formate + L-methionine + A + NH4(+) + phosphate + 2 H(+). Functionally, catalyzes the conversion of aminoimidazole ribotide (AIR) to 5-hydroxybenzimidazole (5-HBI) in a radical S-adenosyl-L-methionine (SAM)-dependent reaction. Is thus involved in the anaerobic biosynthesis of the benzimidazole lower axial ligand of the cobamide produced by G.sulfurreducens. In Geobacter sulfurreducens (strain ATCC 51573 / DSM 12127 / PCA), this protein is 5-hydroxybenzimidazole synthase.